Reading from the N-terminus, the 283-residue chain is Undecaprenyl-diphosphatase (283 aa).

Helical transmembrane passes span 46-66, 95-115, 127-147, 154-174, 200-220, 227-247, and 259-279; these read PGVS…IAYF, VAMV…KFFW, VPSI…AECM, LGGV…LAVI, FSFL…LKSA, AGPL…WLAI, and TWIF…WWAF.

The protein belongs to the UppP family.

It is found in the cell inner membrane. The enzyme catalyses di-trans,octa-cis-undecaprenyl diphosphate + H2O = di-trans,octa-cis-undecaprenyl phosphate + phosphate + H(+). Functionally, catalyzes the dephosphorylation of undecaprenyl diphosphate (UPP). Confers resistance to bacitracin. This Synechococcus sp. (strain CC9902) protein is Undecaprenyl-diphosphatase.